We begin with the raw amino-acid sequence, 157 residues long: Small ribosomal subunit protein uS7 (157 aa).

It belongs to the universal ribosomal protein uS7 family. In terms of assembly, part of the 30S ribosomal subunit. Contacts proteins S9 and S11.

In terms of biological role, one of the primary rRNA binding proteins, it binds directly to 16S rRNA where it nucleates assembly of the head domain of the 30S subunit. Is located at the subunit interface close to the decoding center, probably blocks exit of the E-site tRNA. The sequence is that of Small ribosomal subunit protein uS7 from Leptospira interrogans serogroup Icterohaemorrhagiae serovar copenhageni (strain Fiocruz L1-130).